The chain runs to 143 residues: Large ribosomal subunit protein uL11 (143 aa).

This sequence belongs to the universal ribosomal protein uL11 family. Part of the ribosomal stalk of the 50S ribosomal subunit. Interacts with L10 and the large rRNA to form the base of the stalk. L10 forms an elongated spine to which L12 dimers bind in a sequential fashion forming a multimeric L10(L12)X complex. One or more lysine residues are methylated.

Functionally, forms part of the ribosomal stalk which helps the ribosome interact with GTP-bound translation factors. This chain is Large ribosomal subunit protein uL11, found in Caulobacter sp. (strain K31).